The sequence spans 396 residues: MLHMGRKRVSVFGSTGCIGQKAVQILRDNPDDFEVVALVAKQDAHLLASQARLLSANMAVVAEDAAYETLRELLRGTCVEVGAGTAGVMDAASRDVDSAVMAITGIAALHPVIRLIKSGVKSIALANKESVVCGGELLINAAKQTGVNIVPVDSEHNAVFQILAHDGCVARVTLTASGGPFLRWTREQMQAVTPSDALAHPVWKMGRKISVDSATMVNKALEVIEAHYLFSLDPDSIDVTVHPESVVHAVAAYPNGTSISLMSVPDMGIPTLHALYWPQSATVCGSTLDLASYGKLTFMEPDLERFPALGFGFEALRSSKPRAACIALNAANEVAVEAFLNFEIAFLDIPNIIMSAMDKLACCEVNSISEAGEYDLICRARTREICDTLKVSEFIR.

4 residues coordinate NADPH: T15, G16, I18, and N127. K128 contacts 1-deoxy-D-xylulose 5-phosphate. E129 is an NADPH binding site. Residue D153 coordinates Mn(2+). 1-deoxy-D-xylulose 5-phosphate is bound by residues S154, E155, S177, and H200. Residue E155 coordinates Mn(2+). Position 206 (G206) interacts with NADPH. 1-deoxy-D-xylulose 5-phosphate is bound by residues S213, N218, K219, and E222. E222 provides a ligand contact to Mn(2+).

This sequence belongs to the DXR family. Requires Mg(2+) as cofactor. Mn(2+) is required as a cofactor.

It carries out the reaction 2-C-methyl-D-erythritol 4-phosphate + NADP(+) = 1-deoxy-D-xylulose 5-phosphate + NADPH + H(+). The protein operates within isoprenoid biosynthesis; isopentenyl diphosphate biosynthesis via DXP pathway; isopentenyl diphosphate from 1-deoxy-D-xylulose 5-phosphate: step 1/6. Functionally, catalyzes the NADPH-dependent rearrangement and reduction of 1-deoxy-D-xylulose-5-phosphate (DXP) to 2-C-methyl-D-erythritol 4-phosphate (MEP). This Anaplasma marginale (strain Florida) protein is 1-deoxy-D-xylulose 5-phosphate reductoisomerase.